The sequence spans 792 residues: Coiled-coil domain-containing protein R3HCC1L (792 aa).

The segment at Arg-7–Gly-27 is EJC-binding motif; may mediate interaction with the EJC. Disordered regions lie at residues Lys-32–Val-61 and Glu-527–Thr-567. Residue Ser-688 is modified to Phosphoserine. Thr-712 carries the post-translational modification Phosphothreonine. Residues Arg-751–Ile-783 adopt a coiled-coil conformation. The tract at residues Arg-772 to Val-792 is disordered.

As to quaternary structure, may interact with the exon junction complex (EJC) composed at least of CASC3, EIF4A3, MAGOH and RBM8A. Expressed in placenta.

The chain is Coiled-coil domain-containing protein R3HCC1L (R3HCC1L) from Homo sapiens (Human).